The chain runs to 165 residues: uncharacterized protein (165 aa).

One can recognise a Macro domain in the interval 1–165; sequence MDIKVVKGSI…EAWEKVLGLR (165 aa).

This is an uncharacterized protein from Aquifex aeolicus (strain VF5).